Here is a 241-residue protein sequence, read N- to C-terminus: LexA repressor (241 aa).

The segment at residues 26–46 (FDEMKTALDLRSKSGIHRLIT) is a DNA-binding region (H-T-H motif). Active-site for autocatalytic cleavage activity residues include S162 and K200.

It belongs to the peptidase S24 family. In terms of assembly, homodimer.

The catalysed reaction is Hydrolysis of Ala-|-Gly bond in repressor LexA.. In terms of biological role, represses a number of genes involved in the response to DNA damage (SOS response), including recA and lexA. In the presence of single-stranded DNA, RecA interacts with LexA causing an autocatalytic cleavage which disrupts the DNA-binding part of LexA, leading to derepression of the SOS regulon and eventually DNA repair. This chain is LexA repressor, found in Ruegeria sp. (strain TM1040) (Silicibacter sp.).